The following is a 93-amino-acid chain: DNA-directed RNA polymerase subunit omega (93 aa).

The protein belongs to the RNA polymerase subunit omega family. The RNAP catalytic core consists of 2 alpha, 1 beta, 1 beta' and 1 omega subunit. When a sigma factor is associated with the core the holoenzyme is formed, which can initiate transcription.

It carries out the reaction RNA(n) + a ribonucleoside 5'-triphosphate = RNA(n+1) + diphosphate. Its function is as follows. Promotes RNA polymerase assembly. Latches the N- and C-terminal regions of the beta' subunit thereby facilitating its interaction with the beta and alpha subunits. This is DNA-directed RNA polymerase subunit omega from Acinetobacter baylyi (strain ATCC 33305 / BD413 / ADP1).